The following is a 369-amino-acid chain: MKSGRFIGVMSGTSLDGVDVVLATIDEHRVAQLASLSWPIPVSLKQAVLDICQGQQLTLSQFGQLDTQLGRLFADAVNALLKEQNLQARDIVAIGCHGQTVWHEPTGVAPHTLQIGDNNQIVARTGITVVGDFRRRDIALGGQGAPLVPAFHHALLAHPTERRMVLNIGGIANLSLLIPGQPVGGYDTGPGNMLMDAWIWRQAGKPYDKDAEWARAGKVILPLLQNMLSDPYFSQPAPKSTGREYFNYGWLERHLRHFPGVDPRDVQATLAELTAVTISEQVLLSGGCERLMVCGGGSRNPLLMARLAALLPGTEVTTTDAVGISGDDMEALAFAWLAWRTLAGLPGNLPSVTGASQETVLGAIFPANL.

12 to 19 contributes to the ATP binding site; sequence GTSLDGVD.

It belongs to the anhydro-N-acetylmuramic acid kinase family.

It carries out the reaction 1,6-anhydro-N-acetyl-beta-muramate + ATP + H2O = N-acetyl-D-muramate 6-phosphate + ADP + H(+). The protein operates within amino-sugar metabolism; 1,6-anhydro-N-acetylmuramate degradation. It functions in the pathway cell wall biogenesis; peptidoglycan recycling. Catalyzes the specific phosphorylation of 1,6-anhydro-N-acetylmuramic acid (anhMurNAc) with the simultaneous cleavage of the 1,6-anhydro ring, generating MurNAc-6-P. Is required for the utilization of anhMurNAc either imported from the medium or derived from its own cell wall murein, and thus plays a role in cell wall recycling. This is Anhydro-N-acetylmuramic acid kinase from Escherichia coli (strain SMS-3-5 / SECEC).